Here is a 155-residue protein sequence, read N- to C-terminus: SsrA-binding protein (155 aa).

The protein belongs to the SmpB family.

It is found in the cytoplasm. Its function is as follows. Required for rescue of stalled ribosomes mediated by trans-translation. Binds to transfer-messenger RNA (tmRNA), required for stable association of tmRNA with ribosomes. tmRNA and SmpB together mimic tRNA shape, replacing the anticodon stem-loop with SmpB. tmRNA is encoded by the ssrA gene; the 2 termini fold to resemble tRNA(Ala) and it encodes a 'tag peptide', a short internal open reading frame. During trans-translation Ala-aminoacylated tmRNA acts like a tRNA, entering the A-site of stalled ribosomes, displacing the stalled mRNA. The ribosome then switches to translate the ORF on the tmRNA; the nascent peptide is terminated with the 'tag peptide' encoded by the tmRNA and targeted for degradation. The ribosome is freed to recommence translation, which seems to be the essential function of trans-translation. The sequence is that of SsrA-binding protein from Lawsonia intracellularis (strain PHE/MN1-00).